The primary structure comprises 463 residues: Mitochondrial dynamics protein MID51 (463 aa).

Residues 1-23 (MAGAGERKGKKDDNGIGTAIDFV) are Mitochondrial intermembrane-facing. The chain crosses the membrane as a helical span at residues 24–46 (LSNARLVLGVGGAAMLGIATLAV). Over 47–463 (KRMYDRAISA…LSEPEVLLQT (417 aa)) the chain is Cytoplasmic. The segment at 49-195 (MYDRAISAPT…LSGSLYDDLQ (147 aa)) is dimerization. Phosphoserine is present on residues Ser55, Ser59, Ser79, and Ser94. The segment at 57–79 (PTSPTRLSHSGKRSWEEPNWMGS) is disordered. The interval 104–123 (AFDTDTFCPPRPKPVARKGQ) is disordered. Residues 160 to 169 (AAVDICAELR) are important for interaction with DNM1L. ADP is bound by residues Ser187, Ser189, and His201. The segment at 234-243 (RRENPEYFPR) is important for interaction with DNM1L. The ADP site is built by Ser340, Arg342, and Lys368.

Belongs to the MID49/MID51 family. In terms of assembly, homodimer. Interacts with DNM1L.

The protein localises to the mitochondrion outer membrane. Functionally, mitochondrial outer membrane protein which regulates mitochondrial fission/fusion dynamics. Promotes the recruitment and association of the fission mediator dynamin-related protein 1 (DNM1L) to the mitochondrial surface independently of the mitochondrial fission FIS1 and MFF proteins. Regulates DNM1L GTPase activity and DNM1L oligomerization. Binds ADP and can also bind GDP, although with lower affinity. Does not bind CDP, UDP, ATP, AMP or GTP. Inhibits DNM1L GTPase activity in the absence of bound ADP. Requires ADP to stimulate DNM1L GTPase activity and the assembly of DNM1L into long, oligomeric tubules with a spiral pattern, as opposed to the ring-like DNM1L oligomers observed in the absence of bound ADP. Does not require ADP for its function in recruiting DNM1L. The sequence is that of Mitochondrial dynamics protein MID51 (MIEF1) from Pongo abelii (Sumatran orangutan).